The sequence spans 983 residues: GPI ethanolamine phosphate transferase 2, catalytic subunit (983 aa).

The Lumenal portion of the chain corresponds to 1 to 431 (MRLGSGTFAT…SLSAQVAQYD (431 aa)). N-linked (GlcNAc...) asparagine glycosylation is present at asparagine 194. The next 12 membrane-spanning stretches (helical) occupy residues 432 to 452 (IYSMMVGTVVVLEVLTLLLLS), 471 to 491 (GFSLLFYLVILVLSAVHVIVC), 506 to 526 (LAAGGVMVLASALLCVIVSVL), 552 to 572 (LLILLGTAGHVLSLGASSFVE), 699 to 719 (VLAALSLLVVFVLVQRGCSPV), 721 to 741 (KAALALGLLGVYCYRAAIGSV), 752 to 772 (ISKGIIEARFVYVFVLGILFT), 789 to 809 (LKTVGLWEIYSGLVLLAALLF), 812 to 832 (HNLPVLAFSLLIQTLMTKFIW), 879 to 899 (VEIPAVLLTAFGTYAGPVLWA), 919 to 939 (ACFCYALICSIPVFTYIVLVT), and 955 to 975 (LLYEGMHLLITAAVCVFFTAM).

The protein belongs to the PIGG/PIGN/PIGO family. PIGG subfamily. As to quaternary structure, part of the ethanolamine phosphate transferase 2 complex composed by PIGG and PIGF. PIGF is required to stabilize it. Competes with PIGO for the binding of PIGF.

Its subcellular location is the endoplasmic reticulum membrane. The protein operates within glycolipid biosynthesis; glycosylphosphatidylinositol-anchor biosynthesis. Catalytic subunit of the ethanolamine phosphate transferase 2 complex that transfers an ethanolamine phosphate (EtNP) from a phosphatidylethanolamine (PE) to the 6-OH position of the second alpha-1,6-linked mannose of a 6-PEtn-alpha-D-Man-(1-&gt;2)-alpha-D-Man-(1-&gt;6)-2-PEtn-alpha-D-Man-(1-&gt;4)-alpha-D-GlcN-(1-&gt;6)-(1-radyl,2-acyl-sn-glycero-3-phospho)-2-acyl-inositol (also termed H7) intermediate to generate a 6-PEtn-alpha-D-Man-(1-&gt;2)-6-PEtn-alpha-D-Man-(1-&gt;6)-2-PEtn-alpha-D-Man-(1-&gt;4)-alpha-D-GlcN-(1-&gt;6)-(1-radyl,2-acyl-sn-glycero-3-phospho)-2-acyl-inositol (also termed H8) and participates in the eleventh step of the glycosylphosphatidylinositol-anchor biosynthesis. This is GPI ethanolamine phosphate transferase 2, catalytic subunit from Homo sapiens (Human).